Consider the following 93-residue polypeptide: Small ribosomal subunit protein uS19 (93 aa).

It belongs to the universal ribosomal protein uS19 family.

In terms of biological role, protein S19 forms a complex with S13 that binds strongly to the 16S ribosomal RNA. The chain is Small ribosomal subunit protein uS19 from Leifsonia xyli subsp. xyli (strain CTCB07).